A 211-amino-acid polypeptide reads, in one-letter code: Uridine kinase (211 aa).

12-19 provides a ligand contact to ATP; that stretch reads GGSGSGKT.

Belongs to the uridine kinase family.

It localises to the cytoplasm. It catalyses the reaction uridine + ATP = UMP + ADP + H(+). The enzyme catalyses cytidine + ATP = CMP + ADP + H(+). The protein operates within pyrimidine metabolism; CTP biosynthesis via salvage pathway; CTP from cytidine: step 1/3. Its pathway is pyrimidine metabolism; UMP biosynthesis via salvage pathway; UMP from uridine: step 1/1. The chain is Uridine kinase from Anoxybacillus flavithermus (strain DSM 21510 / WK1).